A 360-amino-acid chain; its full sequence is GTPase Obg (360 aa).

The Obg domain maps to 1–156 (MFVDSVEIII…KCVRLELKLI (156 aa)). Residues 157-360 (ADIGLVGFPN…LKFVLLKALQ (204 aa)) enclose the OBG-type G domain. GTP is bound by residues 163-170 (GFPNAGKS), 188-192 (FTTLV), 210-213 (DIPG), 279-282 (NKCD), and 341-343 (SAV). Mg(2+) is bound by residues Ser170 and Thr190.

This sequence belongs to the TRAFAC class OBG-HflX-like GTPase superfamily. OBG GTPase family. In terms of assembly, monomer. Mg(2+) serves as cofactor.

It is found in the cytoplasm. An essential GTPase which binds GTP, GDP and possibly (p)ppGpp with moderate affinity, with high nucleotide exchange rates and a fairly low GTP hydrolysis rate. Plays a role in control of the cell cycle, stress response, ribosome biogenesis and in those bacteria that undergo differentiation, in morphogenesis control. The polypeptide is GTPase Obg (Helicobacter pylori (strain J99 / ATCC 700824) (Campylobacter pylori J99)).